Consider the following 434-residue polypeptide: Zinc carboxypeptidase (434 aa).

The signal sequence occupies residues methionine 1 to alanine 33. The propeptide at lysine 34–glutamine 114 is activation peptide. Residues glycine 122–serine 423 enclose the Peptidase M14 domain. Zn(2+)-binding residues include histidine 183 and glutamate 186. Positions glycine 270–histidine 295 are disordered. Residues alanine 282–histidine 293 are compositionally biased toward basic residues. Residue histidine 315 coordinates Zn(2+). Glutamate 388 functions as the Proton donor/acceptor in the catalytic mechanism.

Belongs to the peptidase M14 family. Zn(2+) is required as a cofactor.

The enzyme catalyses Releases a C-terminal residue, which may be hydrophobic or positively charged.. Carboxypeptidase that possesses the specificities of both mammalian Cpase A and B. Thus shows broad substrate specificity, being able to cleave Cbz-Gly-Leu, Cbz-Gly-Val, Cbz-Gly-Phe, Cbz-Gly-Lys and Bz-Gly-Arg in vitro. The polypeptide is Zinc carboxypeptidase (Saccharothrix mutabilis subsp. capreolus (Streptomyces capreolus)).